Here is a 571-residue protein sequence, read N- to C-terminus: UvrABC system protein C (571 aa).

The GIY-YIG domain occupies 15–93 (TSPGVYLWKD…VDRFNPEFNI (79 aa)). A UVR domain is found at 184–219 (NNYLNELTNKMHTAANNMQFELALFLRDGLTYLKKL).

The protein belongs to the UvrC family. In terms of assembly, interacts with UvrB in an incision complex.

The protein resides in the cytoplasm. Functionally, the UvrABC repair system catalyzes the recognition and processing of DNA lesions. UvrC both incises the 5' and 3' sides of the lesion. The N-terminal half is responsible for the 3' incision and the C-terminal half is responsible for the 5' incision. The chain is UvrABC system protein C from Mycoplasmopsis agalactiae (strain NCTC 10123 / CIP 59.7 / PG2) (Mycoplasma agalactiae).